A 499-amino-acid chain; its full sequence is Glycerol kinase (499 aa).

Thr-17 contacts ADP. Residues Thr-17, Thr-18, and Ser-19 each coordinate ATP. Thr-17 lines the sn-glycerol 3-phosphate pocket. Position 21 (Arg-21) interacts with ADP. Positions 87, 88, 139, and 243 each coordinate sn-glycerol 3-phosphate. Residues Arg-87, Glu-88, Tyr-139, Asp-243, and Gln-244 each contribute to the glycerol site. Residues Thr-265 and Gly-308 each coordinate ADP. Residues Thr-265, Gly-308, Gln-312, and Gly-409 each coordinate ATP. ADP is bound by residues Gly-409 and Asn-413.

This sequence belongs to the FGGY kinase family.

The catalysed reaction is glycerol + ATP = sn-glycerol 3-phosphate + ADP + H(+). The protein operates within polyol metabolism; glycerol degradation via glycerol kinase pathway; sn-glycerol 3-phosphate from glycerol: step 1/1. Inhibited by fructose 1,6-bisphosphate (FBP). Its function is as follows. Key enzyme in the regulation of glycerol uptake and metabolism. Catalyzes the phosphorylation of glycerol to yield sn-glycerol 3-phosphate. The protein is Glycerol kinase of Pseudomonas entomophila (strain L48).